The following is a 372-amino-acid chain: Protein phosphatase Mn(2+)-dependent 1K (372 aa).

Residues 1-29 constitute a mitochondrion transit peptide; it reads MLSTAFITLVRSGRNQVKKRVLLSSILLQ. Positions 46-61 are critical for association with the BCKDH complex; sequence RCSRFDPDGSGQPATW. One can recognise a PPM-type phosphatase domain in the interval 94-346; sequence NVGCASLIGK…DNSTAVVVPF (253 aa). Mn(2+) contacts are provided by Asp127 and Gly128. Ser248 carries the post-translational modification Phosphoserine. Mn(2+) contacts are provided by Asp298 and Asp337.

Belongs to the PP2C family. As to quaternary structure, interacts with E1 and E2 components of the branched-chain alpha-ketoacid dehydrogenase (BCKDH) complex. Interacts with both BCKDHA and BCKDHB chains of the E1 subunit. Interacts with the 24-meric DBT/E2 core of the BCKD complex with a 1:1 stoichiometry; the N-terminal region (residues 49-61) of PPM1K and C-terminal linker of the lipoyl domain of DBT/E2 (residues 145-160) are critical for this interaction whereas the lipoyl prosthetic group is dispensable. Competes with BCKDK for binding to DBT/E2; this interaction is modulated by branched-chain alpha-keto acids (BCKAs). At steady state, BCKDH holoenzyme preferentially binds BCKDK and BCKDHA/E1 is phosphorylated. In response to high levels of BCKAs, BCKDK is replaced by PPM1K leading to BCKDHA/E1 dephosphorylation. The cofactor is Mn(2+).

It localises to the mitochondrion matrix. It carries out the reaction O-phospho-L-seryl-[3-methyl-2-oxobutanoate dehydrogenase] + H2O = L-seryl-[3-methyl-2-oxobutanoate dehydrogenase] + phosphate. The enzyme catalyses O-phospho-L-seryl-[protein] + H2O = L-seryl-[protein] + phosphate. It participates in protein modification. Serine/threonine-protein phosphatase component of macronutrients metabolism. Together with BCKDK serves as a metabolic regulatory node that coordinates branched-chain amino acids (BCAAs) and protein synthesis with glucose and lipid metabolism via two distinct phosphoprotein targets: BCKDHA/E1a subunit of the branched-chain alpha-ketoacid dehydrogenase (BCKDH) complex and ACLY, a lipogenic enzyme of Krebs cycle. At high levels of branched-chain ketoacids (BCKAs), dephosphorylates and activates mitochondrial BCKDH complex, a multisubunit complex consisting of three components, heterotetrameric E1 composed of BCKDHA and BCKDHB chains, 24-meric E2 core composed of DBT and homodimeric E3 composed of DLD, each involved in different steps of BCAA catabolism. Tightly associates with the E2 subunit of BCKDH complex and dephosphorylates Ser-333 of BCKDHA chain of the E1 subunit likely through on-off binding to individual E2 subunits of the 24-meric E2 core to increase the efficiency of the dephosphorylation reaction. Appears to dephosphorylate and inactivate cytosolic ACLY in response to changes of cellular carbohydrate abundance. Overnutrition and in particular high-fructose diet, activates MLXIPL/ChREBP leading to increased BCKDK to PPM1K ratio, phosphorylation of ACLY on Ser-454 and activation of its enzymatic activity that ultimately results in the generation of acetyl-CoA and malonyl-CoA immediate substrates of de novo lipogenesis. Recognizes phosphosites having SxS or RxxS motifs and strictly depends on Mn(2+) ions for the phosphatase activity. Regulates Ca(2+)-induced opening of mitochondrial transition pore and apoptotic cell death. The chain is Protein phosphatase Mn(2+)-dependent 1K (Ppm1k) from Rattus norvegicus (Rat).